Here is a 205-residue protein sequence, read N- to C-terminus: uncharacterized protein (205 aa).

Residues 11 to 71 form the HTH tetR-type domain; the sequence is KTRRALVDAA…EMVDEAGLML (61 aa).

This is an uncharacterized protein from Haemophilus influenzae (strain ATCC 51907 / DSM 11121 / KW20 / Rd).